Reading from the N-terminus, the 258-residue chain is tRNA pseudouridine synthase A (258 aa).

The Nucleophile role is filled by aspartate 55. Residue tyrosine 113 participates in substrate binding.

This sequence belongs to the tRNA pseudouridine synthase TruA family. Homodimer.

It catalyses the reaction uridine(38/39/40) in tRNA = pseudouridine(38/39/40) in tRNA. Functionally, formation of pseudouridine at positions 38, 39 and 40 in the anticodon stem and loop of transfer RNAs. This chain is tRNA pseudouridine synthase A, found in Limosilactobacillus fermentum (strain NBRC 3956 / LMG 18251) (Lactobacillus fermentum).